The chain runs to 108 residues: Trissin (108 aa).

The signal sequence occupies residues 1-29 (MTKTTMHWLAHFQIILLCIWLMCPPSSQA). Intrachain disulfides connect cysteine 32–cysteine 43, cysteine 35–cysteine 52, and cysteine 39–cysteine 51. A propeptide spanning residues 57-108 (RKRSDPDALRQSSNRRLIDFILLQGRALFTQELRERRHNGTLMDLGLNTYYP) is cleaved from the precursor.

It localises to the secreted. In terms of biological role, activates the G-protein coupled receptor TrissinR in vitro, leading to increased intracellular calcium ion levels. This is Trissin from Drosophila melanogaster (Fruit fly).